The following is a 475-amino-acid chain: Transmembrane protein 181 (475 aa).

Transmembrane regions (helical) follow at residues 16–36 (HFVL…FVGI), 131–151 (EIIV…IVGF), 175–195 (LEIW…CLFA), 214–234 (SVLL…SFLV), 245–265 (LFQS…YHGI), 276–296 (FYLP…TLGI), 320–340 (MKVF…FLIV), 356–376 (LKFL…ILYL), and 401–421 (FLSF…VYSP). Serine 443 bears the Phosphoserine mark.

Belongs to the TMEM181 family. Interacts with cytolethal distending toxin.

It is found in the membrane. Mediates action of cytolethal distending toxins (CDT), which are secreted by many pathogenic bacteria. Expression level of TMEM181 is rate-limiting for intoxication. The chain is Transmembrane protein 181 (TMEM181) from Homo sapiens (Human).